Here is a 71-residue protein sequence, read N- to C-terminus: Conotoxin Bu25 (71 aa).

A signal peptide spans 1–21 (MGMRMMVTVFPLVVLATTVVS). A propeptide spanning residues 22 to 44 (LRSNRASDGRRGIVNKLNDLVPK) is cleaved from the precursor. Arg70 is modified (arginine amide).

This sequence belongs to the conotoxin A superfamily. In terms of processing, contains 3 disulfide bonds. They are not indicated here, since framework IV presents two different connectivities (I-V, II-III, IV-VI and I-III, II-V, IV-VI). As to expression, expressed by the venom duct.

It localises to the secreted. This is Conotoxin Bu25 from Conus bullatus (Bubble cone).